The following is an 89-amino-acid chain: Strongylocin 2 (89 aa).

The signal sequence occupies residues 1–22; sequence MNIRTASFTFIVVMMILSQTMA. Residues 23 to 38 constitute a propeptide that is removed on maturation; it reads DRFFNEPEEDDHLVES. Tryptophan 39 is modified (6'-bromotryptophan).

Contains 3 disulfide bonds.

Functionally, has antimicrobial activity against Gram-negative bacteria and Gram-positive bacteria with minimum inhibitory concentration (MIC) between 0.78 uM and 3.13 uM. This chain is Strongylocin 2, found in Echinus esculentus (Sea urchin).